Reading from the N-terminus, the 411-residue chain is Lissencephaly-1 homolog (411 aa).

In terms of domain architecture, LisH spans 9 to 41 (QREELNQAIADYLGSNGYADSLETFRKEADLST). Residues 56–83 (TSVIRLQKKVMELEAKLTEAEKEVIEGA) are a coiled coil. 7 WD repeats span residues 106–147 (GHRA…RSLK), 148–187 (GHTD…ECIK), 191–230 (GHDH…CVKT), 233–272 (GHRE…CKVE), 275–334 (DHEH…CLLT), 337–376 (GHDN…CMKT), and 379–411 (AHQH…WECR).

It belongs to the WD repeat LIS1/nudF family.

The protein localises to the cytoplasm. It localises to the cytoskeleton. The protein resides in the microtubule organizing center. Its subcellular location is the centrosome. Its function is as follows. Positively regulates the activity of the minus-end directed microtubule motor protein dynein. May enhance dynein-mediated microtubule sliding by targeting dynein to the microtubule plus end. Required for several dynein- and microtubule-dependent processes. The sequence is that of Lissencephaly-1 homolog from Drosophila sechellia (Fruit fly).